Reading from the N-terminus, the 549-residue chain is Chaperonin GroEL (549 aa).

ATP contacts are provided by residues 30-33, K51, 87-91, G415, and D497; these read TLGP and DGTTT.

It belongs to the chaperonin (HSP60) family. As to quaternary structure, forms a cylinder of 14 subunits composed of two heptameric rings stacked back-to-back. Interacts with the co-chaperonin GroES.

The protein localises to the cytoplasm. The catalysed reaction is ATP + H2O + a folded polypeptide = ADP + phosphate + an unfolded polypeptide.. In terms of biological role, together with its co-chaperonin GroES, plays an essential role in assisting protein folding. The GroEL-GroES system forms a nano-cage that allows encapsulation of the non-native substrate proteins and provides a physical environment optimized to promote and accelerate protein folding. The protein is Chaperonin GroEL of Pectobacterium atrosepticum (strain SCRI 1043 / ATCC BAA-672) (Erwinia carotovora subsp. atroseptica).